The chain runs to 578 residues: GRAM domain-containing protein 4 (578 aa).

Residues 83–135 are a coiled coil; the sequence is HLEIALLEKHFLQEELRKLREETNIDTLKQELEKERQRRTELEQKITDIAKTR. Residues 132-157 form a disordered region; the sequence is AKTRTDESATQQLSKGPSQTNGADKQ. Residues 139–154 are compositionally biased toward polar residues; the sequence is SATQQLSKGPSQTNGA. 3 consecutive transmembrane segments (helical) span residues 236 to 256, 334 to 354, and 356 to 376; these read IAFI…MFLF, MTQK…FFHY, and TIGL…DFIF. A GRAM domain is found at 446 to 524; the sequence is SSFHEIFSLL…TDITDIQKYK (79 aa).

The protein localises to the mitochondrion membrane. It localises to the endoplasmic reticulum membrane. Plays a role as a mediator of e2f1-induced apoptosis in the absence of p53/TP53. This is GRAM domain-containing protein 4 (gramd4) from Xenopus laevis (African clawed frog).